The primary structure comprises 436 residues: POU domain, class 2, transcription factor 3 (436 aa).

Disordered stretches follow at residues 1–40, 140–186, and 256–278; these read MVNL…NGLD, QTGP…DEPS, and AESS…SEVF. The region spanning 183-257 is the POU-specific domain; it reads DEPSDLEELE…LLEKWLNDAE (75 aa). Positions 258 to 275 are enriched in low complexity; it reads SSPSDPSVSTPSSYPSLS. A DNA-binding region (homeobox) is located at residues 281–340; sequence KRKKRTSIETNIRLTLEKRFQDNPKPSSEEISMIAEQLSMEKEVVRVWFCNRRQKEKRIN. The disordered stretch occupies residues 363 to 421; it reads LGPLSVPPVHSTMPGTVTSSCSPGNNSRPSSPGSGLHASSPTASQNNSKAAVNSASSFN. Low complexity-rich tracts occupy residues 381 to 397 and 405 to 421; these read SSCS…PGSG and ASQN…SSFN.

This sequence belongs to the POU transcription factor family. Class-2 subfamily. As to quaternary structure, interacts (via the POU domain) with POU2AF1 and POU2AF2 in a DNA-dependent manner; this interaction recruits POU2AF2 to chromatin and increases POU2F3 transactivation activity. As to expression, specifically expressed in epidermis and cultured keratinocytes.

It localises to the nucleus. Its function is as follows. Transcription factor that binds to the octamer motif (5'-ATTTGCAT-3') and regulates cell type-specific differentiation pathways. Involved in the regulation of keratinocytes differentiation. The POU2F3-POU2AF2/POU2AF3 complex drives the expression of tuft-cell-specific genes, a rare chemosensory cells that coordinate immune and neural functions within mucosal epithelial tissues. In Homo sapiens (Human), this protein is POU domain, class 2, transcription factor 3.